The following is a 418-amino-acid chain: Transcription termination factor Rho (418 aa).

In terms of domain architecture, Rho RNA-BD spans Asp-48–Arg-123. Residues Gly-169–Gly-174, Lys-181–Met-186, and Arg-212 contribute to the ATP site.

The protein belongs to the Rho family. Homohexamer. The homohexamer assembles into an open ring structure.

In terms of biological role, facilitates transcription termination by a mechanism that involves Rho binding to the nascent RNA, activation of Rho's RNA-dependent ATPase activity, and release of the mRNA from the DNA template. In Allochromatium vinosum (strain ATCC 17899 / DSM 180 / NBRC 103801 / NCIMB 10441 / D) (Chromatium vinosum), this protein is Transcription termination factor Rho.